The chain runs to 283 residues: Shikimate dehydrogenase (NADP(+)) (283 aa).

Residues 19–21 (SFS) and T66 contribute to the shikimate site. Residue K70 is the Proton acceptor of the active site. E82 provides a ligand contact to NADP(+). N91 and D106 together coordinate shikimate. NADP(+) contacts are provided by residues 129–133 (GAGGA) and I225. Y227 lines the shikimate pocket. G248 contacts NADP(+).

This sequence belongs to the shikimate dehydrogenase family. As to quaternary structure, homodimer.

The catalysed reaction is shikimate + NADP(+) = 3-dehydroshikimate + NADPH + H(+). The protein operates within metabolic intermediate biosynthesis; chorismate biosynthesis; chorismate from D-erythrose 4-phosphate and phosphoenolpyruvate: step 4/7. Its function is as follows. Involved in the biosynthesis of the chorismate, which leads to the biosynthesis of aromatic amino acids. Catalyzes the reversible NADPH linked reduction of 3-dehydroshikimate (DHSA) to yield shikimate (SA). The protein is Shikimate dehydrogenase (NADP(+)) of Methanosphaera stadtmanae (strain ATCC 43021 / DSM 3091 / JCM 11832 / MCB-3).